Consider the following 237-residue polypeptide: Oligoribonuclease, mitochondrial (237 aa).

Residues 1-25 constitute a mitochondrion transit peptide; the sequence is MLGGSLGSRLLRGVGGTRGQFRARG. The Exonuclease domain occupies 43-207; that stretch reads MVWVDLEMTG…DDISESIKEL (165 aa). Positions 47 and 49 each coordinate Mg(2+). Ser92 carries the phosphoserine modification. Residue Tyr122 is modified to Phosphotyrosine. Asp147 serves as a coordination point for Mg(2+). Lys173 is modified (N6-acetyllysine). His194 is an active-site residue. Asp199 contacts Mg(2+).

This sequence belongs to the oligoribonuclease family. In terms of assembly, homodimer. Homotetramer. The cofactor is Mn(2+). It depends on Mg(2+) as a cofactor.

It is found in the mitochondrion intermembrane space. It localises to the mitochondrion matrix. The protein resides in the mitochondrion. Its subcellular location is the cytoplasm. The protein localises to the nucleus. 3'-to-5'exoribonuclease that preferentially degrades DNA and RNA oligonucleotides composed of only two nucleotides. Binds and degrades longer oligonucleotides with a lower affinity. Plays dual roles in mitochondria, scavenging nanoRNAs (small RNA oligonucleotides of &lt;5 nucleotides) that are produced by the degradosome and clearing short RNAs that are generated by RNA processing. Essential for correct initiation of mitochondrial transcription, degrading mitochondrial RNA dinucleotides to prevent RNA-primed transcription at non-canonical sites in the mitochondrial genome. Essential for embryonic development. The polypeptide is Oligoribonuclease, mitochondrial (REXO2) (Bos taurus (Bovine)).